The sequence spans 170 residues: Peptide deformylase 2 (170 aa).

Fe cation is bound by residues C94 and H136. E137 is an active-site residue. Residue H140 participates in Fe cation binding.

This sequence belongs to the polypeptide deformylase family. Fe(2+) is required as a cofactor.

The catalysed reaction is N-terminal N-formyl-L-methionyl-[peptide] + H2O = N-terminal L-methionyl-[peptide] + formate. Functionally, removes the formyl group from the N-terminal Met of newly synthesized proteins. Requires at least a dipeptide for an efficient rate of reaction. N-terminal L-methionine is a prerequisite for activity but the enzyme has broad specificity at other positions. The chain is Peptide deformylase 2 from Xanthomonas campestris pv. campestris (strain ATCC 33913 / DSM 3586 / NCPPB 528 / LMG 568 / P 25).